The primary structure comprises 292 residues: ATP synthase gamma chain (292 aa).

Belongs to the ATPase gamma chain family. As to quaternary structure, F-type ATPases have 2 components, CF(1) - the catalytic core - and CF(0) - the membrane proton channel. CF(1) has five subunits: alpha(3), beta(3), gamma(1), delta(1), epsilon(1). CF(0) has three main subunits: a, b and c.

The protein resides in the cell inner membrane. Functionally, produces ATP from ADP in the presence of a proton gradient across the membrane. The gamma chain is believed to be important in regulating ATPase activity and the flow of protons through the CF(0) complex. This is ATP synthase gamma chain from Brucella ovis (strain ATCC 25840 / 63/290 / NCTC 10512).